An 87-amino-acid chain; its full sequence is Small ribosomal subunit protein bS16 (87 aa).

The protein belongs to the bacterial ribosomal protein bS16 family.

The sequence is that of Small ribosomal subunit protein bS16 from Nitrosospira multiformis (strain ATCC 25196 / NCIMB 11849 / C 71).